A 329-amino-acid polypeptide reads, in one-letter code: Ketol-acid reductoisomerase (NADP(+)) (329 aa).

The region spanning 1–181 (MKVYYEQDAN…GGTRSGVIET (181 aa)) is the KARI N-terminal Rossmann domain. Residues 24-27 (YGSQ), Arg47, and 82-85 (DQYQ) each bind NADP(+). His107 is a catalytic residue. Gly133 is a binding site for NADP(+). Positions 182-327 (TFREETETDL…ARLRSMMPWL (146 aa)) constitute a KARI C-terminal knotted domain. 4 residues coordinate Mg(2+): Asp190, Glu194, Glu226, and Glu230. Substrate is bound at residue Ser251.

It belongs to the ketol-acid reductoisomerase family. Mg(2+) serves as cofactor.

It catalyses the reaction (2R)-2,3-dihydroxy-3-methylbutanoate + NADP(+) = (2S)-2-acetolactate + NADPH + H(+). It carries out the reaction (2R,3R)-2,3-dihydroxy-3-methylpentanoate + NADP(+) = (S)-2-ethyl-2-hydroxy-3-oxobutanoate + NADPH + H(+). The protein operates within amino-acid biosynthesis; L-isoleucine biosynthesis; L-isoleucine from 2-oxobutanoate: step 2/4. It functions in the pathway amino-acid biosynthesis; L-valine biosynthesis; L-valine from pyruvate: step 2/4. Its function is as follows. Involved in the biosynthesis of branched-chain amino acids (BCAA). Catalyzes an alkyl-migration followed by a ketol-acid reduction of (S)-2-acetolactate (S2AL) to yield (R)-2,3-dihydroxy-isovalerate. In the isomerase reaction, S2AL is rearranged via a Mg-dependent methyl migration to produce 3-hydroxy-3-methyl-2-ketobutyrate (HMKB). In the reductase reaction, this 2-ketoacid undergoes a metal-dependent reduction by NADPH to yield (R)-2,3-dihydroxy-isovalerate. This chain is Ketol-acid reductoisomerase (NADP(+)), found in Oleidesulfovibrio alaskensis (strain ATCC BAA-1058 / DSM 17464 / G20) (Desulfovibrio alaskensis).